Here is a 152-residue protein sequence, read N- to C-terminus: Nucleoside diphosphate kinase (152 aa).

The ATP site is built by Lys9, Phe57, Arg85, Thr91, Arg102, and Asn112. The active-site Pros-phosphohistidine intermediate is the His115.

This sequence belongs to the NDK family. In terms of assembly, homotetramer. Requires Mg(2+) as cofactor.

It is found in the cytoplasm. It carries out the reaction a 2'-deoxyribonucleoside 5'-diphosphate + ATP = a 2'-deoxyribonucleoside 5'-triphosphate + ADP. It catalyses the reaction a ribonucleoside 5'-diphosphate + ATP = a ribonucleoside 5'-triphosphate + ADP. Functionally, major role in the synthesis of nucleoside triphosphates other than ATP. The ATP gamma phosphate is transferred to the NDP beta phosphate via a ping-pong mechanism, using a phosphorylated active-site intermediate. The protein is Nucleoside diphosphate kinase of Rhodopirellula baltica (strain DSM 10527 / NCIMB 13988 / SH1).